The following is a 254-amino-acid chain: MNITQIRNATIVVKYANKKFLIDPMLAEKGTYATFPETIRQDLFNPLVSLPTSIDNILDGVDAVIVTHLHLDHFDDVAKNVLPKNIKMFVQNEADAKEVKASGFKNVEVLHQDTVFEGIQLVKTKGEHGRGEELLNLMGDVCGLVFKHPSEKVLYVAGDTVWYDAIEDEIHTHQPEIIVVNGGDNQRLDLGSLIMGKEDIYEVHKAAPHAKIISVHMEAVNHWTLSREELKNFSKEKGFSSNILVPEDGESYTF.

Belongs to the UPF0173 family.

The sequence is that of UPF0173 protein YddR (yddR) from Bacillus subtilis (strain 168).